Consider the following 5571-residue polypeptide: MSVPPPGATPSRTSRTKGLKDRPRMENEEKLVEYLKRATTDLRQARRRLREVEDQQQEPVAIIGMSCRYPGDVHSPDDLWRMVADGDDGISTFPAERGWDVERLYDPDPDRPGTTYTTRGGFLHDAHLFDAEFFGISPREALATDPQQRLLLETSWEAFERAGIDPTSLRGSHTGVFAGVMYQDYAHRVRPVPEEFEGYLGNGSAGSIASGRVAYTFGLEGPAVTVDTACSSSLVALHLAVQSLRQGDSTLALAGGVAIMSTPDVFVEYSRQRGLAADGRCKAFAEAADGTGWAEGVGMLLLERLSDARRNGHPVLAVVRGSAVNQDGASSRLTAPNGPSQQRVIRQALANARLTPADVDVVEAHGTGTKLGDPIEAQALLATYGQDRPAERPLWLGSLKSNIGHTQAAAGVGGVIKMVMAIRHGVAPRTLHVDRPTPEVDWSAGAVELLTEARPWPETDRPRRAGVSAFGVSGTNAHVIIEQPPAIEGTGLGDDAPPTAEHPEERTPADGGPAPQPVAWPLSAKSPEALRDQARQLRHHLTSGATASALSHPLADIGHSLATTRTAFDHRVVVLGTDHDALLRSLAALADGGTDPSVVQGSVRGRGRVAFVFPGQGSQWEGMARELLDTSPVFARQMQACADALSAYVDWSLHDVLRGAPDAPGLDRVDVVQPVLWAIMISLSELWRAHGVQPSAVVGHSQGEIAAAYVAGALSLDDSARVVALRSKALRALSGKGGMLSVPLSEEDLTPQLAAHTGQLSIAAVNGPGSVVVSGDADALEGLFEELTAAGVRARKVAVDYASHSAHVEALREELLTRLGPVAPRPAKVPFYSTVTGERLAGTEALDADYWYRNLRETVRFEQATRALLAQNIGVFVETGPHPVLAVGLQETIDATGGSAVALGSLRRGEGGPDRFLRSLAEAYAHGAPLDWDLLFPGARRVELPTYAFQRDHYWLQIPEGGPADAAGLGLAAVEHPLLAAATSLADGDGLIVTGRLSTRSLPWLADHAVTGTVLLPGTAFVELALRAADLTDCHLLDELTLHTPLVVPDDDPVRVQVRVAAPDPATGRRALTVHARPESPDGDADQEEQGAEWTLHATGYLAVGAHEPAVPDQGQWPPAGATPLDVTDLYPRLADAGYGYGLAFQGLRAAWRLGDDVYAEAELPDEHSDQAGRYGLHPALLDAALHAAGFAGFPDGDGALPGPRLPFSWTGVTLSAVGARALRIRLARTGDDTLTVTLTDPAGEPVATVESLALRPLATNQAPRTPSDLHRVAYTPRDLPADASTAHWAVLDADDLAYALNLPSHPDRDALAALDPAPPVVLTGWPVPDDPAPQAARTVLARALHDIQDWLADDRLADTRLVVVTHNALPADDWQDTDPVAASLTGLLRTAQSENPGRLVLIDTDGHPASWQALPALVATGEPQAALRLGEARVPRLAPAATDAALSVPAAVPAATDASLPVPADTSAWRLAVESPGTLDHLTLIPWAAATAPLEEGQVRIAVRTCGVNFRDVLIALGMYPDPDMLGSEGAGRVVEVGPGVTDLAVGDRVAGILAGGFGPLAVIDAPKVARIPDSWTWEQAASVPLAFATAWYALVDLAALAPGEKVLVHAAAGGVGMAAVQIARHLGAEVYATASPAKWDTLRALGLDDDHIASSRDTAFAEKFPAVDVVLDSLAGEFVDASLRLLPHGGRFVEMGKTDRRDPERIAADHPGVHYRAFDLRESGDRRLREMLDEIFALVEDGTLHPLPYRSWDLRRAPEAFRHMQQARHIGKIVLTVPPALDPDGTVLVTGATGTLGALVTRHLVTEHGVRRLLLVSRSGPQAPGADALLADLAAAGAEATLTACDTADRDQLRAVLDAVPADHPLTAVIHTAGALDDGVLSALTPERLDAVLRPKADAAWHLHELTAGHDLAAFVLFSSAAGLFGNAGQGNYAAANAFLDALAQHRRALGLPATSLAWGLWEERGGMTGHLDTADVGRLSRTGVATLDSAHGLALFDAALSTGQTLLVPLPLDRAALHRQARTGSLPALLSGLVRTTPARRTATGTAATGSVGDTLARRLTAAAPADRDRIVNDLVRDHAAAVLGHGSATAVGLGRAFRDLGFDSLTAVELRNRLGAATGLRLPATLVFDHPTPEELAAHLRDTLLGAADSGAAAVVTTSAEADEPLAVVAMSCRFPGGTGSPEELWELLADGGDAIGALPADRGWDLAGLYHPDPDQPGTSYARHGGFLHDAGDFDASLFGISPREALAMDPQQRLLLETSWEAFERAGLDLRTLRGSRTGVYVGALPSSYGGTLHDAPDGLEGHLMTGNSTSIVSGRLAYTFGLQGPAVTVDTACSSSLVALHLAVQALRSGEVTMALVGGATVMSNPGGLIAFSRQRGLAADGRCKAFSAAADGMGMAEGVGMLLVERLSDAERLGHPVLAVVRGSAINQDGASNGLTAPNGPSQQRVIRDALADARLNASEVDVVEAHGTGTKLGDPIEAQALLATYGQDRPEERPVLLGSVKSNIGHTQAAAGVAGVIKMVLAMRHGLLPRTLHVDEPSTQIDWNAGALSLLAEETPWPETGRPRRAAVSSFGISGTNAHVILEQAPASVPAPASASVPGDSGEAPDPVVVPWVVSGRSADALRAQAGQLAAWADSAAGRDTEPVDVGRALATARSFLEHRAVVVGGDRAELVEALRALATDPAAGSTAADPDGPGGRLGLVFSGQGSQRPGMGRELYTAYPVFAAALDEVCGVLDEVMGAQPPSEGWTGSLREVMFEVSSDLLDETGFTQPALFAFEVALYRLLESWGVAGEVVAGHSVGEIAAAHVAGVLSLADACALVAARGRLMQALPSGGAMVAVEASEEEVAAVLAGRGDEGAGIGAVNAPGSVVVSGVEAAVEEVAARFAGLGRRTRRLKVSHAFHSPLMDPMLAEFRRVVEGLSFAPPRMTVVSTLTGAVASDEELCSVDYWVRHARETVRFGDAVRCMAGAEVDRFAEVGPSGVLAGLVRASVTGEGTRAAVALQRGNRTEPGALVSALGELFVSGLPVDWATYFAGRPLRRVELPTYAFQRARYWLEGAAGAGGRQSAADGQDEVDAAFWEAVEHGDLSALGAGLDVDGEARLADVLPALSSWRRRAEQASVVDAWRYRVTWAPLPEPARASATGVWLLLVPAGAEDAADATRTVEGALAEHGGEVVKVDVAHPEADEARTALAQQITEQFIERFGVTEIGRLRGVVSLLALADGDDPRHPSVSRGLALTLGLVQALGDMELTAPLWCLTRGAVAVDASDGVDGAVQAQVWGLGRAVALEHPDRWGGLVDLPEYVDPRTARRLTGVLTGTGAGAGAGGLGREDQIALRATGAFGCRLTRDTVAPAGDPGEWTLSGTVLVTGGTGAVGGHVARWLAARGAERLVLVSRRGPRAPGADALRDELTAAGAQVEMLACDLSDGSAVTALVAGLAAGGDLTAVVHAAGVLDDGVLASLSVERCAEVLAAKARAAHHLDLATRDVNLDAFVLFSSVSGVLGAAGQANYAAANAHLDAVALHRHALGLPAVSVAWGPWAEGGMAGEDAAAGRLSRDGWTAMAPEPAATAMARAVAAGHPAVMIADVDWQRFAPAYAAVRPGNSLLTGVPEARQAQPQPWSADGERSAWASRLAGLPEEEQRTALLDLVRGQVASVLGHASMQTIDPARAFKEIGFDSLTAVELRNRLNAATGLALPATLVFDYPTPVALAEYVGSQVLGTSSPAVTGPLVVAAVDEPVAIIGMSCRFPGGVQSPEELWDLVVGGRDAISSFPTDRGWDVDALFDPDPEKPGKTYTRHGAFLHDAAEFDPRFFGISPREASAMDPQQRLLLETAWEAFERAGIDPAALRGSATGVFTGTNGQDYATRLRETPQGVEGYLMTGNAGSVISGRLAYTFGLEGPAMTVDTACSASLVALHLAAQALRQGECSLALAGGATVMSTPGAFVEFSRQGGLAADGRCKAFSASADGTGWGEGVGLLLLERLSDAERNGHPVLAVVRGSAVNQDGASNGLTAPNGPSQQRVIRQALANARLSASEVDVVEAHGTGTRLGDPIEAQALLATYGQDRPEDRPLWLGSVKSNLGHTQAAAGVAGIIKSVMAMRHGVLPATLHVDEPTSEVDWSAGAVELLTEARPWPEVGRPRRAAVSGFGVSGTNAHVILEQAAETGSTSEEGPAALVPTVVWPISGRDEQALRGQARRLRERLVVEPGLSAADVGLSLATTRSCFEQRAVVVGETRDELLAGLEALAEGREASGLVRGSARGSVNVGFLFSGQGSQRVGMGRELAERFPVFAGVFGEVCGLLDPLLPRPLGEVIAAGPGVLGRTVFTQPALFAVEVAAARLLLSWGVRPQVVAGHSVGEIAAAHVAGVLSLEDACALVAARGRLMEALPAGGVMVALEATEGEVAELLEAHAGAPVGVAAVNGPRAVVVSGDASPVGEIADVVRSWGRRTKRLEVSHAFHSPLMEPMLAEFTEVVSGLEFAAPQIGFVSAVTGGLVGADVVSRPEYWVEHVAQPVRFADAVRAAVDEAGVSLFVEVGPGGALSAMGPDCLDETVGDKQPVVFVPSLRADRPEPLAVTTALATAHVNGVQPDWQAVFAGTGAARVELPTYAFQRGRYWLDASVGGTGDASAVGLATLEHPLLAGVVDLAEEDRTVFTGRLSLTTHPWLADHAVFGSVLLPGTGFVELALAAGQYTGFGHLDELTVHAPLVLPARGAVHVQLVLDGVDDSGRRALTVHSRPEGVAGEQTWTRHATGALTVAEAVDPPAVSAVWPPAGAIEVELDDPYERFAAEGYAYGPAFQGLRRVWRGDGELFAEVELGAQELEAAGRFGVHPALLDAALHPLLLADGSTGQDGDTPTAGRLPFSWTGVSLRATGATTARVTLAFTDGDAVRITVADGDGGLVASVDALVTRPIAAGQLAAGRSGLFEVEWAPVSSSPAGSASWAVVGGGEAGVSAGGPGLGSYEDLAALRRAMDSGAPVPEVVFAHCGGGAEAADVVGGTHTATHAALVSLREWLADERFAGARLAIVTGGAVAVRPGDEVSDLAGAAVWGLVRSAQSEHPGQFVLVDTDGAAEPSSAAAALATGEPQVAVRGGEVFVPRLARADRTPAADSGVRWDPDKSLLVTGASGVLAGLVVRHAVAEWAVRHVVLVSRSGADGLAQELAEAGVSVQQARCDVADREAVAAVLAGIPAEHRLGGVIHTAGVLDDGVIESLTPERLAPVLRPKVDGAWWLHELTADVDLSVFAVFSSAAGVFGAAGQGNYAAANAFLDALALYRHREGLPATSLSWGLWAERSGMAGQLADAQLERLERTGVHPLSSSEGLALLDAALATGRPWLVPVGLDLGVMRAQADLGVTPLFRGLVRAPLRRAQVDKAASNAPDELRRELAVASAADRERMVLDLVRDRTAVVLGFGSRDEVGVDSGFTSMGVDSLAGVDLRNRLSSATGLRLPTTLIFDYPTPAALARYLHTHLVDDAVDQVDIRSVLAELDRLEATLAQVQAGDVGHMKIASRLQDLVGQWHGSGGATPGEDTVTDLEEATADEIFSFIDDNFGSTEVH.

The tract at residues 1 to 27 (MSVPPPGATPSRTSRTKGLKDRPRMEN) is disordered. Basic and acidic residues predominate over residues 18-27 (GLKDRPRMEN). The Ketosynthase family 3 (KS3) 1 domain occupies 57-483 (QEPVAIIGMS…GTNAHVIIEQ (427 aa)). 3 module regions span residues 57 to 2148 (QEPV…RDTL), 2167 to 3728 (DEPL…GSQV), and 3746 to 5485 (DEPV…HTHL). Catalysis depends on for beta-ketoacyl synthase 1 activity residues Cys-230, His-365, and His-405. The tract at residues 485 to 518 (PAIEGTGLGDDAPPTAEHPEERTPADGGPAPQPV) is disordered. In terms of domain architecture, Malonyl-CoA:ACP transacylase (MAT) 1 spans 611-926 (FVFPGQGSQW…LRSLAEAYAH (316 aa)). An N-terminal hotdog fold 1 region spans residues 976–1109 (HPLLAAATSL…GYLAVGAHEP (134 aa)). The PKS/mFAS DH 1 domain occupies 976–1264 (HPLLAAATSL…LRPLATNQAP (289 aa)). His-1008 serves as the catalytic Proton acceptor; for dehydratase activity 1. The C-terminal hotdog fold 1 stretch occupies residues 1122 to 1264 (ATPLDVTDLY…LRPLATNQAP (143 aa)). Asp-1183 functions as the Proton donor; for dehydratase activity 1 in the catalytic mechanism. The Enoyl reductase (ER) domain occupies 1478 to 1777 (GTLDHLTLIP…QARHIGKIVL (300 aa)). Positions 1787–1966 (GTVLVTGATG…TSLAWGLWEE (180 aa)) constitute a Ketoreductase (KR) 1 domain. In terms of domain architecture, Carrier 1 spans 2073-2148 (RIVNDLVRDH…ELAAHLRDTL (76 aa)). An O-(pantetheine 4'-phosphoryl)serine modification is found at Ser-2108. The Ketosynthase family 3 (KS3) 2 domain maps to 2167 to 2593 (DEPLAVVAMS…GTNAHVILEQ (427 aa)). Catalysis depends on for beta-ketoacyl synthase 2 activity residues Cys-2340, His-2475, and His-2515. The 307-residue stretch at 2710–3016 (VFSGQGSQRP…AAVALQRGNR (307 aa)) folds into the Malonyl-CoA:ACP transacylase (MAT) 2 domain. The Ketoreductase (KR) 2 domain occupies 3373-3551 (GTVLVTGGTG…VSVAWGPWAE (179 aa)). One can recognise a Carrier 2 domain in the interval 3653–3728 (TALLDLVRGQ…ALAEYVGSQV (76 aa)). Ser-3688 bears the O-(pantetheine 4'-phosphoryl)serine mark. One can recognise a Ketosynthase family 3 (KS3) 3 domain in the interval 3746-4172 (DEPVAIIGMS…GTNAHVILEQ (427 aa)). Residues Cys-3919, His-4054, and His-4094 each act as for beta-ketoacyl synthase 3 activity in the active site. The Malonyl-CoA:ACP transacylase (MAT) 3 domain maps to 4279 to 4601 (FLFSGQGSQR…ATAHVNGVQP (323 aa)). An N-terminal hotdog fold 2 region spans residues 4649 to 4774 (HPLLAGVVDL…GALTVAEAVD (126 aa)). The PKS/mFAS DH 2 domain maps to 4649–4931 (HPLLAGVVDL…TRPIAAGQLA (283 aa)). The active-site Proton acceptor; for dehydratase activity 2 is the His-4681. The tract at residues 4787 to 4931 (AIEVELDDPY…TRPIAAGQLA (145 aa)) is C-terminal hotdog fold 2. The Proton donor; for dehydratase activity 2 role is filled by Asp-4848. The Ketoreductase (KR) 3 domain occupies 5134–5306 (LLVTGASGVL…TSLSWGLWAE (173 aa)). The 76-residue stretch at 5410–5485 (RMVLDLVRDR…ALARYLHTHL (76 aa)) folds into the Carrier 3 domain. An O-(pantetheine 4'-phosphoryl)serine modification is found at Ser-5445.

Requires pantetheine 4'-phosphate as cofactor.

It functions in the pathway antibiotic biosynthesis. Functionally, second protein in the synthesis of the 16-membered macrolide antibiotics FD-891 and FD-892. Composed of 3 modules. Modifies the product of GfsA by multiple rounds of addition of malonyl-CoA or methylmalonyl-CoA and other modifications to help generate the final products. In Streptomyces halstedii, this protein is Polyketide synthase GfsB.